The following is a 154-amino-acid chain: 6,7-dimethyl-8-ribityllumazine synthase (154 aa).

5-amino-6-(D-ribitylamino)uracil-binding positions include Phe-22, 56–58, and 80–82; these read AFE and AVI. Residue 85–86 coordinates (2S)-2-hydroxy-3-oxobutyl phosphate; that stretch reads AT. The active-site Proton donor is His-88. Phe-113 is a 5-amino-6-(D-ribitylamino)uracil binding site. Residue Arg-127 coordinates (2S)-2-hydroxy-3-oxobutyl phosphate.

It belongs to the DMRL synthase family.

It carries out the reaction (2S)-2-hydroxy-3-oxobutyl phosphate + 5-amino-6-(D-ribitylamino)uracil = 6,7-dimethyl-8-(1-D-ribityl)lumazine + phosphate + 2 H2O + H(+). It participates in cofactor biosynthesis; riboflavin biosynthesis; riboflavin from 2-hydroxy-3-oxobutyl phosphate and 5-amino-6-(D-ribitylamino)uracil: step 1/2. Functionally, catalyzes the formation of 6,7-dimethyl-8-ribityllumazine by condensation of 5-amino-6-(D-ribitylamino)uracil with 3,4-dihydroxy-2-butanone 4-phosphate. This is the penultimate step in the biosynthesis of riboflavin. This chain is 6,7-dimethyl-8-ribityllumazine synthase, found in Clostridium botulinum (strain Okra / Type B1).